Consider the following 683-residue polypeptide: MAGGATAPAGAKPKQPKQKQKKPSSQARKKPSQKQKAMKPVKQELRKVEKQVRVLKARTNGPKVNDTMKTTVTVGTLVGQTQSGLNRQLRVSFNPLLMKSTEGGSTTPLSIRASMYEMWKPLSVEIFATPLSGFSSVVGSVGFMVITLNGLEASADSIDTIKARRHVQMALGRPYRLKLSARELAGPREGWWLVDTSEAPADAYGPAVDLMLAYATENLLGTSSGSTTSYTGTLWQVEMRVTYAFSTYNPKPGLQTLVSQSITGGQTVTIQPSPDDGSLIMTTNSQQVLALLTPRVAGQRKGKSQTIWAIAGSAVDAAATVLGPWGYLLKGGFWLVRLIFGGSSARNTTTRQYQIYPSVESALTDQPIFGNSTGTQSVTVPICHITEVVNPNAESNNLPPPTTGAQPQPQPPAPIEEILLPLAELTGQPGVPPLYTFDGSSYTPPTNWLGSTILLTGIPAHKRVTGNLAKFGVTNLQMSKVAATALEIYDFTDFGVFFGTGSYLSEGGIHTGKTLIYSLMSGQTPNPWLAANQSGTTWYMPSWAGFPQPGQGDYFLQMQDVTDTTTHTTSVNVYFLVAYRQSRRLIAFFNTGGTARPAPTSMLCLYNVDCGRAPQTPYPTFQSTLQSLNQIGVDAKSDPDSDDDISLAGSVIGDEFDSVDHLEREREDLMRRLRDLDLRRFQI.

Positions 1-13 (MAGGATAPAGAKP) are enriched in low complexity. Disordered stretches follow at residues 1 to 45 (MAGG…KQEL) and 391 to 413 (PNAE…QPPA). The span at 14 to 39 (KQPKQKQKKPSSQARKKPSQKQKAMK) shows a compositional bias: basic residues. Positions 398 to 413 (LPPPTTGAQPQPQPPA) are enriched in pro residues.

Belongs to the astroviridae capsid polyprotein family. In terms of processing, specific enzymatic cleavages by the host yield mature proteins.

The protein localises to the virion. Its function is as follows. Self-assembles to form an icosahedral T=3 immature capsid. This is Capsid polyprotein VP90 from Gallus gallus (Chicken).